Reading from the N-terminus, the 346-residue chain is MESTLSAGIIMAEALQNRLPGLENMWLWVTFLGDPKNLFQFCFPAAYYASRRLGISVLWITFIAEWLNLVFKWFLFGDRPFWWVHESGYSTQTPIQIHQFPSSCETGPGSPSGHCMITGAALWPVMTAISSQVASRSRSPWVRVIPGLAYCTFLLAVGLSRVFLLAHFPHQVLGGLIVGAALGWLMSPRVPMERELSFYGLTALALMLGASLMYWTLFTLGLDLSWSINLASKWCERPEWVHMDSRPFASLSRDSGSALGLGIALHTPCYAQIRRAHLGNGQKIACFVLAMGLLVFLEWLGYPPQISLFYIFNFLKYTLWPCLVLALVPWVVHTLSDQEAPPIRSS.

Topologically, residues 1 to 24 are lumenal; that stretch reads MESTLSAGIIMAEALQNRLPGLEN. Residues 25–45 traverse the membrane as a helical segment; that stretch reads MWLWVTFLGDPKNLFQFCFPA. Topologically, residues 46-56 are cytoplasmic; sequence AYYASRRLGIS. Residues 57–77 traverse the membrane as a helical segment; sequence VLWITFIAEWLNLVFKWFLFG. Over 78-108 the chain is Lumenal; sequence DRPFWWVHESGYSTQTPIQIHQFPSSCETGP. R79 lines the substrate pocket. Residues 109 to 129 traverse the membrane as a helical segment; the sequence is GSPSGHCMITGAALWPVMTAI. Residue H114 is the Proton donor of the active site. The Cytoplasmic portion of the chain corresponds to 130–138; that stretch reads SSQVASRSR. A helical transmembrane segment spans residues 139-159; sequence SPWVRVIPGLAYCTFLLAVGL. Residues 160 to 167 are Lumenal-facing; sequence SRVFLLAH. Substrate is bound at residue R161. Residue H167 is the Nucleophile of the active site. The helical transmembrane segment at 168–186 threads the bilayer; that stretch reads FPHQVLGGLIVGAALGWLM. Topologically, residues 187–197 are cytoplasmic; it reads SPRVPMERELS. A helical membrane pass occupies residues 198–218; sequence FYGLTALALMLGASLMYWTLF. The Lumenal portion of the chain corresponds to 219–254; it reads TLGLDLSWSINLASKWCERPEWVHMDSRPFASLSRD. A helical transmembrane segment spans residues 255-273; it reads SGSALGLGIALHTPCYAQI. Residues 274–283 are Cytoplasmic-facing; the sequence is RRAHLGNGQK. Residues 284 to 304 form a helical membrane-spanning segment; that stretch reads IACFVLAMGLLVFLEWLGYPP. The Lumenal portion of the chain corresponds to 305-307; the sequence is QIS. Residues 308–328 traverse the membrane as a helical segment; sequence LFYIFNFLKYTLWPCLVLALV. The Cytoplasmic segment spans residues 329–346; it reads PWVVHTLSDQEAPPIRSS.

Belongs to the glucose-6-phosphatase family. In terms of tissue distribution, widely expressed. Highly expressed in heart and testis and to a lower extent in spleen, stomach, small intestine, skeletal muscle and uterus. Expressed in muscle, brain, thymus, lung, kidney, spleen and pancreas (at protein level). In the brain, expressed in astrocytes (at protein level).

The protein resides in the endoplasmic reticulum membrane. The catalysed reaction is D-glucose 6-phosphate + H2O = D-glucose + phosphate. It functions in the pathway carbohydrate biosynthesis; gluconeogenesis. Its activity is regulated as follows. Inhibited by vanadate. Functionally, hydrolyzes glucose-6-phosphate to glucose in the endoplasmic reticulum. May form with the glucose-6-phosphate transporter (SLC37A4/G6PT) a ubiquitously expressed complex responsible for glucose production through glycogenolysis and gluconeogenesis. Probably required for normal neutrophil function. The polypeptide is Glucose-6-phosphatase 3 (G6pc3) (Mus musculus (Mouse)).